Reading from the N-terminus, the 651-residue chain is Acetyl-coenzyme A synthetase (651 aa).

CoA-binding positions include 189–192 (RGGK), Thr311, and Asn335. ATP is bound by residues 387-389 (GEP), 411-416 (DTWWQT), Asp500, and Arg515. Ser523 contributes to the CoA binding site. Arg526 serves as a coordination point for ATP. Residues Val537, His539, and Val542 each contribute to the Mg(2+) site. Arg586 is a binding site for CoA. Lys611 bears the N6-acetyllysine mark.

The protein belongs to the ATP-dependent AMP-binding enzyme family. The cofactor is Mg(2+). In terms of processing, acetylated. Deacetylation by the SIR2-homolog deacetylase activates the enzyme.

The enzyme catalyses acetate + ATP + CoA = acetyl-CoA + AMP + diphosphate. Functionally, catalyzes the conversion of acetate into acetyl-CoA (AcCoA), an essential intermediate at the junction of anabolic and catabolic pathways. AcsA undergoes a two-step reaction. In the first half reaction, AcsA combines acetate with ATP to form acetyl-adenylate (AcAMP) intermediate. In the second half reaction, it can then transfer the acetyl group from AcAMP to the sulfhydryl group of CoA, forming the product AcCoA. The chain is Acetyl-coenzyme A synthetase from Brucella suis (strain ATCC 23445 / NCTC 10510).